Here is a 635-residue protein sequence, read N- to C-terminus: 1-deoxy-D-xylulose-5-phosphate synthase (635 aa).

Thiamine diphosphate is bound by residues His76 and 117-119 (GHS). Asp148 provides a ligand contact to Mg(2+). Residues 149–150 (GA), Asn177, Tyr294, and Glu379 contribute to the thiamine diphosphate site. Position 177 (Asn177) interacts with Mg(2+).

It belongs to the transketolase family. DXPS subfamily. As to quaternary structure, homodimer. Mg(2+) serves as cofactor. It depends on thiamine diphosphate as a cofactor.

The enzyme catalyses D-glyceraldehyde 3-phosphate + pyruvate + H(+) = 1-deoxy-D-xylulose 5-phosphate + CO2. The protein operates within metabolic intermediate biosynthesis; 1-deoxy-D-xylulose 5-phosphate biosynthesis; 1-deoxy-D-xylulose 5-phosphate from D-glyceraldehyde 3-phosphate and pyruvate: step 1/1. In terms of biological role, catalyzes the acyloin condensation reaction between C atoms 2 and 3 of pyruvate and glyceraldehyde 3-phosphate to yield 1-deoxy-D-xylulose-5-phosphate (DXP). This Neisseria meningitidis serogroup C (strain 053442) protein is 1-deoxy-D-xylulose-5-phosphate synthase.